Here is a 497-residue protein sequence, read N- to C-terminus: Vacuolar-processing enzyme (497 aa).

The N-terminal stretch at 1–31 (METHKSLLFFTNYVLFLVFTLSFLPIPGLLA) is a signal peptide. The active site involves His-180. Cys-222 (nucleophile) is an active-site residue. Cys-255 and Cys-269 form a disulfide bridge. Asn-320 and Asn-374 each carry an N-linked (GlcNAc...) asparagine glycan. Cystine bridges form between Cys-433–Cys-463 and Cys-445–Cys-480.

Belongs to the peptidase C13 family.

Functionally, asparagine-specific endopeptidase involved in the processing of vacuolar seed protein precursors into the mature forms. The sequence is that of Vacuolar-processing enzyme from Ricinus communis (Castor bean).